We begin with the raw amino-acid sequence, 138 residues long: Small ribosomal subunit protein uS9 (138 aa).

Over residues 100 to 118 (PENRPPLKTEGYLTRDPRA) the composition is skewed to basic and acidic residues. Residues 100–138 (PENRPPLKTEGYLTRDPRAKERKKYGLHKARKAPQYSKR) are disordered. Basic residues predominate over residues 119 to 138 (KERKKYGLHKARKAPQYSKR).

The protein belongs to the universal ribosomal protein uS9 family.

The polypeptide is Small ribosomal subunit protein uS9 (Trichormus variabilis (strain ATCC 29413 / PCC 7937) (Anabaena variabilis)).